A 525-amino-acid chain; its full sequence is Hydroxyneurosporene desaturase (525 aa).

Belongs to the carotenoid/retinoid oxidoreductase family.

It carries out the reaction rhodopin + A = (3E)-3,4-didehydrorhodopin + AH2. It participates in carotenoid biosynthesis; spheroidene biosynthesis. In terms of biological role, catalyzes the introduction of C-3,4 double bonds into 1-hydroxyneurosporene (1-HO-Neu) to yield demethylspheroidene (DMS). The preferred substrates are 1-hydroxy-neurosporene, 1-hydroxy-lycopene and 1,1-dihydroxyneurosporene, however the 3,4-didehydrolycopene derivatives such as 1,1-dihydroxy-3,4-didehydrolycopene, 1-methoxy-1-hydroxy-3,4-didehydrolycopene and 1-hydroxy-3,4-didehydrolycopene are also efficiently converted. 1-HO-carotene derivatives can be also used. This Rubrivivax gelatinosus (Rhodocyclus gelatinosus) protein is Hydroxyneurosporene desaturase (crtD).